The sequence spans 337 residues: DNA-directed RNA polymerase subunit alpha (337 aa).

The interval 1–231 (MRNITTSAYT…KQLSVFDKIT (231 aa)) is alpha N-terminal domain (alpha-NTD). The alpha C-terminal domain (alpha-CTD) stretch occupies residues 248 to 337 (NTKLLQNITD…IAELKAQNEG (90 aa)).

The protein belongs to the RNA polymerase alpha chain family. In terms of assembly, homodimer. The RNAP catalytic core consists of 2 alpha, 1 beta, 1 beta' and 1 omega subunit. When a sigma factor is associated with the core the holoenzyme is formed, which can initiate transcription.

The catalysed reaction is RNA(n) + a ribonucleoside 5'-triphosphate = RNA(n+1) + diphosphate. Its function is as follows. DNA-dependent RNA polymerase catalyzes the transcription of DNA into RNA using the four ribonucleoside triphosphates as substrates. The protein is DNA-directed RNA polymerase subunit alpha of Campylobacter jejuni subsp. jejuni serotype O:6 (strain 81116 / NCTC 11828).